A 118-amino-acid polypeptide reads, in one-letter code: Peptidyl-tRNA hydrolase (118 aa).

Belongs to the PTH2 family.

The protein localises to the cytoplasm. It carries out the reaction an N-acyl-L-alpha-aminoacyl-tRNA + H2O = an N-acyl-L-amino acid + a tRNA + H(+). Functionally, the natural substrate for this enzyme may be peptidyl-tRNAs which drop off the ribosome during protein synthesis. The protein is Peptidyl-tRNA hydrolase of Thermococcus onnurineus (strain NA1).